Reading from the N-terminus, the 75-residue chain is Protein SlyX homolog (75 aa).

This sequence belongs to the SlyX family.

In Vibrio campbellii (strain ATCC BAA-1116), this protein is Protein SlyX homolog.